A 144-amino-acid chain; its full sequence is Large ribosomal subunit protein uL15 (144 aa).

Residues 1-14 (MKLHELKPNEGARD) are compositionally biased toward basic and acidic residues. Positions 1-43 (MKLHELKPNEGARDVRKRVGRGTSSGTGKTAGRGQKGQKARSK) are disordered. Residues 23–35 (TSSGTGKTAGRGQ) show a composition bias toward gly residues.

This sequence belongs to the universal ribosomal protein uL15 family. As to quaternary structure, part of the 50S ribosomal subunit.

Binds to the 23S rRNA. The sequence is that of Large ribosomal subunit protein uL15 from Latilactobacillus sakei subsp. sakei (strain 23K) (Lactobacillus sakei subsp. sakei).